The sequence spans 571 residues: Septation ring formation regulator EzrA (571 aa).

Residues 1-3 (MYY) lie on the Extracellular side of the membrane. A helical transmembrane segment spans residues 4 to 22 (MLIGFIIVVIAVIGAGYIL). The Cytoplasmic portion of the chain corresponds to 23 to 571 (KRKHYQRINE…ESKVSVDDIE (549 aa)). Coiled-coil stretches lie at residues 248-298 (LAQM…DTLE), 326-374 (DALA…ASGE), 400-437 (KFAE…ERER), and 478-529 (RIAE…ENHF).

It belongs to the EzrA family.

The protein resides in the cell membrane. Negative regulator of FtsZ ring formation; modulates the frequency and position of FtsZ ring formation. Inhibits FtsZ ring formation at polar sites. Interacts either with FtsZ or with one of its binding partners to promote depolymerization. This Listeria monocytogenes serotype 4b (strain CLIP80459) protein is Septation ring formation regulator EzrA.